The chain runs to 239 residues: MATPHINAEMGDFADVVLMPGDPLRAKHIAETFLENVREVNNVRGMLGFTGTYKGRKISVMGHGMGIPSCSIYTKELITDFGVKKIIRVGSCGAVRMDVKLRDVVIGMGACTDSKVNRIRFKDHDFAAIADFDMVRNAVDAAKALGVDARVGNLFSADLFYSPDGEMFDVMEKYGVLGVEMEAAGIYGVAAEFGAKALTICTVSDHIRTHEQTTAAERQTTFNDMIKIALESVLLGDKE.

Residue H5 participates in a purine D-ribonucleoside binding. Residues G21, R25, R44, and 88 to 91 (RVGS) contribute to the phosphate site. A purine D-ribonucleoside contacts are provided by residues 180 to 182 (EME) and 204 to 205 (SD). D205 acts as the Proton donor in catalysis.

This sequence belongs to the PNP/UDP phosphorylase family. Homohexamer; trimer of homodimers.

The catalysed reaction is a purine D-ribonucleoside + phosphate = a purine nucleobase + alpha-D-ribose 1-phosphate. It carries out the reaction a purine 2'-deoxy-D-ribonucleoside + phosphate = a purine nucleobase + 2-deoxy-alpha-D-ribose 1-phosphate. Catalyzes the reversible phosphorolytic breakdown of the N-glycosidic bond in the beta-(deoxy)ribonucleoside molecules, with the formation of the corresponding free purine bases and pentose-1-phosphate. The chain is Purine nucleoside phosphorylase DeoD-type from Salmonella heidelberg (strain SL476).